We begin with the raw amino-acid sequence, 196 residues long: Pycsar effector protein GmPycTM (196 aa).

The next 3 helical transmembrane spans lie at 34–54, 82–102, and 176–196; these read ISFS…SGII, ITTI…TYLF, and VNWL…FLFL.

It is found in the cell inner membrane. Pycsar (pyrimidine cyclase system for antiphage resistance) provides immunity against bacteriophage. The pyrimidine cyclase (PycC) synthesizes cyclic nucleotides in response to infection; these serve as specific second messenger signals. The signals activate the adjacent effector, leading to bacterial cell death and abortive phage infection. A clade C Pycsar system. Functionally, the effector gene of a two-gene Pycsar system. Expression of this and adjacent uridylate cyclase GmPycC (AC P0DV42) probably confers resistance to bacteriophage. The genes are probably only expressed in response to bacteriophage infection. Probably only responds to cUMP (produced by its cognate NTP cyclase), acts by impairing membrane integrity. The polypeptide is Pycsar effector protein GmPycTM (Gulbenkiania mobilis).